Reading from the N-terminus, the 256-residue chain is Autophagy-related protein 40 (256 aa).

The signal sequence occupies residues 1-16 (MFNLILWPLFLLTSVA). Residues 17–67 (IPLQLTLEVVYLTSSVDFSKASAAKTATSLGQSPVVITIYKSLLKYWSLYE) are Lumenal-facing. The chain crosses the membrane as a helical span at residues 68-88 (FIHFIYLYTPIDAFLNFLPFT). The Cytoplasmic portion of the chain corresponds to 89 to 256 (SLLMSFGSIC…DILDETTELD (168 aa)). Positions 197–243 (QPQGDKNRYQNGDRESTKNGAAYQKSSQQSSSFEQNFTSTEFPNDYD) are disordered. The segment covering 199-213 (QGDKNRYQNGDREST) has biased composition (basic and acidic residues). A compositionally biased stretch (low complexity) spans 222-238 (SSQQSSSFEQNFTSTEF). Residues 242-245 (YDFM) carry the ATG8-binding motif.

In terms of assembly, interacts with ATG8 and ATG11.

It localises to the endoplasmic reticulum membrane. The protein resides in the preautophagosomal structure membrane. In terms of biological role, acts as a receptor for reticulophagy. Directs autophagic sequestration of folded tubules/sheets derived from the cortical endoplasmic reticulum (cER) and the cytoplasmic endoplasmic reticulum (cytoER) into autophagosomes. Is not required for the cytoplasm-to-vacuole targeting pathway, mitophagy, pexophagy, and non-selective autophagy. This is Autophagy-related protein 40 from Saccharomyces cerevisiae (strain ATCC 204508 / S288c) (Baker's yeast).